Here is a 373-residue protein sequence, read N- to C-terminus: Cytoplasmic envelopment protein 2 (373 aa).

The disordered stretch occupies residues 1-35 (MAQLGPRRPLAPPGPPGTLPRPDSRAGARGTRDRV). Over residues 9 to 19 (PLAPPGPPGTL) the composition is skewed to pro residues. Basic and acidic residues predominate over residues 22–35 (PDSRAGARGTRDRV).

The protein belongs to the herpesviridae cytoplasmic envelopment protein 2 family. Interacts with cytoplasmic envelopment protein 3 and with the capsid.

Its subcellular location is the virion tegument. It is found in the host cytoplasm. It localises to the host nucleus. Functionally, plays a critical role in cytoplasmic virus egress. Participates in the final step of tegumentation and envelope acquisition within the host cytoplasm by directly interacting with the capsid. Upon virion binding to target cell, a signaling cascade is triggered to disrupt the interaction with the capsid, thereby preparing capsid uncoating. The sequence is that of Cytoplasmic envelopment protein 2 (UL16) from Homo sapiens (Human).